We begin with the raw amino-acid sequence, 61 residues long: Small ribosomal subunit protein uS14 (61 aa).

Residues Cys24, Cys27, Cys40, and Cys43 each contribute to the Zn(2+) site.

The protein belongs to the universal ribosomal protein uS14 family. Zinc-binding uS14 subfamily. In terms of assembly, part of the 30S ribosomal subunit. Contacts proteins S3 and S10. It depends on Zn(2+) as a cofactor.

Functionally, binds 16S rRNA, required for the assembly of 30S particles and may also be responsible for determining the conformation of the 16S rRNA at the A site. The polypeptide is Small ribosomal subunit protein uS14 (Streptococcus pyogenes serotype M49 (strain NZ131)).